Reading from the N-terminus, the 565-residue chain is Sensor histidine kinase YpdA (565 aa).

Residues 1–3 are Cytoplasmic-facing; that stretch reads MHE. The chain crosses the membrane as a helical span at residues 4-24; it reads IFNMLLAVFDRAALMLICLFF. The Periplasmic portion of the chain corresponds to 25–45; that stretch reads LIRIRLFRELLHKSAHSPKEL. Residues 46–66 form a helical membrane-spanning segment; it reads LAVTAIFSLFALFSTWSGVPV. Topologically, residues 67–74 are cytoplasmic; sequence EGSLVNVR. A helical transmembrane segment spans residues 75–95; the sequence is IIAVMSGGILFGPWVGIITGV. Residues 96–107 lie on the Periplasmic side of the membrane; sequence IAGIHRYLIDIG. The chain crosses the membrane as a helical span at residues 108-128; the sequence is GVTAIPCFITSILAGCISGWI. Residues 129–139 lie on the Cytoplasmic side of the membrane; sequence NLKIPKAQRWR. A helical transmembrane segment spans residues 140–160; that stretch reads VGILGGMLCETLTMILVIVWA. Topologically, residues 161–172 are periplasmic; the sequence is PTTALGIDIVSK. A helical membrane pass occupies residues 173–193; it reads IGIPMILGSVCIGFIVLLVQS. Over 194-565 the chain is Cytoplasmic; sequence VEGEKEASAA…PVASQATLLL (372 aa). The GAF domain occupies 223–342; it reads VNSESLRKVC…AVGLSQIIST (120 aa). In terms of domain architecture, Histidine kinase spans 343–554; sequence QLEVSRAEQL…EIAFYIPNQR (212 aa). Histidine 371 is modified (phosphohistidine; by autocatalysis).

Interacts with BtsT and YhjX. Post-translationally, autophosphorylated.

It localises to the cell inner membrane. The catalysed reaction is ATP + protein L-histidine = ADP + protein N-phospho-L-histidine.. In terms of biological role, member of the two-component regulatory system YpdA/YpdB, which is part of a nutrient-sensing regulatory network composed of YpdA/YpdB, the high-affinity pyruvate signaling system BtsS/BtsR and their respective target proteins, YhjX and BtsT. YpdA activates YpdB by phosphorylation in response to high concentrations of extracellular pyruvate. Activation of the YpdA/YpdB signaling cascade also promotes BtsS/BtsR-mediated btsT expression. The sequence is that of Sensor histidine kinase YpdA (ypdA) from Escherichia coli (strain K12).